The sequence spans 394 residues: Ceramide glucosyltransferase-B (394 aa).

The Lumenal segment spans residues 1 to 10 (MAVLDLALQG). A helical transmembrane segment spans residues 11–32 (LAIFGCILFFVLWFMHFLSIVY). Residues 33–195 (TRLHLNKKVS…QVYFGTSHPR (163 aa)) are Cytoplasmic-facing. A short sequence motif (D1) is located at residue Asp-92. Asp-144 is a short sequence motif (D2). The helical transmembrane segment at 196–215 (SYISANVTGIKCVTGMSCLM) threads the bilayer. At 216-287 (RKEVLDQAGG…KLRINMLPAT (72 aa)) the chain is on the lumenal side. Position 236 (Asp-236) is a short sequence motif, D3. The Proton acceptor role is filled by Asp-236. The (Q/R)XXRW signature appears at 272–276 (RMIRW). A helical membrane pass occupies residues 288–304 (IICEPISECFVASLIIG). The Cytoplasmic segment spans residues 305–309 (WAAHH). The chain crosses the membrane as a helical span at residues 310 to 328 (IFRWDIMVFFMCHCLAWFI). The Lumenal portion of the chain corresponds to 329–348 (FDYIQLRGVQGGPLNFSKLD). A helical transmembrane segment spans residues 349-369 (YAVAWFIRESMTIYIFLSALW). Over 370-394 (DPTISWRTGRYRLRCGGTAEEILDV) the chain is Cytoplasmic.

This sequence belongs to the glycosyltransferase 2 family.

It is found in the golgi apparatus membrane. The enzyme catalyses an N-acylsphing-4-enine + UDP-alpha-D-glucose = a beta-D-glucosyl-(1&lt;-&gt;1')-N-acylsphing-4-enine + UDP + H(+). It catalyses the reaction UDP-alpha-D-xylose + an N-acylsphing-4-enine = a beta-D-xylosyl-(1&lt;-&gt;1')-N-acylsphing-4-enine + UDP + H(+). The catalysed reaction is N-(9Z-octadecenoyl)-sphing-4-enine + UDP-alpha-D-xylose = beta-D-xylosyl-(1&lt;-&gt;1')-N-(9Z-octadecenoyl)-sphing-4-enine + UDP + H(+). It participates in lipid metabolism; sphingolipid metabolism. Its function is as follows. Participates in the initial step of the glucosylceramide-based glycosphingolipid/GSL synthetic pathway at the cytosolic surface of the Golgi. Catalyzes the transfer of glucose from UDP-glucose to ceramide to produce glucosylceramide/GlcCer (such as beta-D-glucosyl-(1&lt;-&gt;1')-N-acylsphing-4-enine). Glucosylceramide is the core component of glycosphingolipids/GSLs, amphipathic molecules consisting of a ceramide lipid moiety embedded in the outer leaflet of the membrane, linked to one of hundreds of different externally oriented oligosaccharide structures. Glycosphingolipids are essential components of membrane microdomains that mediate membrane trafficking and signal transduction. They are implicated in many fundamental cellular processes, including growth, differentiation, migration, morphogenesis, cell-to-cell and cell-to-matrix interactions. Catalyzes the synthesis of xylosylceramide/XylCer (such as beta-D-xylosyl-(1&lt;-&gt;1')-N-acylsphing-4-enine) using UDP-Xyl as xylose donor. This chain is Ceramide glucosyltransferase-B (ugcg-b), found in Xenopus laevis (African clawed frog).